The following is a 1704-amino-acid chain: Vitellogenin-1 (1704 aa).

Positions 1-14 (MKAVVLALTLAFVA) are cleaved as a signal peptide. The Vitellogenin domain occupies 22–660 (FAAGKTYVYK…DAATFMPKSF (639 aa)). Asparagine 446, asparagine 635, asparagine 903, asparagine 908, asparagine 1019, asparagine 1054, asparagine 1080, asparagine 1121, asparagine 1174, asparagine 1285, asparagine 1322, asparagine 1375, asparagine 1379, asparagine 1405, asparagine 1456, and asparagine 1512 each carry an N-linked (GlcNAc...) asparagine glycan. Over residues 1078-1109 (RRNSSSSSSSSSSSSSESRSSRSSSSSSSSSR) the composition is skewed to low complexity. The tract at residues 1078 to 1213 (RRNSSSSSSS…SSDRRSKEVM (136 aa)) is disordered. Residues 1122–1204 (SSSSSSSRRS…FSDSSSSSSS (83 aa)) show a composition bias toward low complexity. In terms of domain architecture, VWFD spans 1442 to 1617 (AECSFVEDTL…SWILPAESCR (176 aa)). 2 disulfides stabilise this stretch: cysteine 1444-cysteine 1580 and cysteine 1467-cysteine 1616.

Phosvitin, an egg yolk storage protein, is one of the most highly phosphorylated (10%) proteins in nature. Post-translationally, the N-terminal of the blood vitellogenin is blocked. In terms of tissue distribution, produced by the liver, secreted into the blood and then sequestered by receptor mediated endocytosis into growing oocytes, where it is generally cleaved, giving rise to the respective yolk components composed of complex suite of small cleavage products.

In terms of biological role, precursor of the major egg-yolk proteins that are sources of nutrients during early development of oviparous organisms. The chain is Vitellogenin-1 (vtg1) from Fundulus heteroclitus (Killifish).